The primary structure comprises 212 residues: MLTSYGTSTIVKTTLLCLLMCVVALFIPFIAQVWLIGFAVVFLLFTLYFFRDPERKTPNETAIIVSPADGKVMQIAPCTLPDSGLPATRVSIFMSPFNVHVNRVPISGKVTMVRYVPGKFLMAFDHASMEHNERMEIALDNGQFEVRFSQVSGFIARRIVCTLQPNDVVTIGRRFGMIKFGSRVDMVLPATVRCCVQQGDNVHAGETIIGRY.

Serine 182 serves as the catalytic Schiff-base intermediate with substrate; via pyruvic acid. At serine 182 the chain carries Pyruvic acid (Ser); by autocatalysis.

Belongs to the phosphatidylserine decarboxylase family. PSD-A subfamily. Heterodimer of a large membrane-associated beta subunit and a small pyruvoyl-containing alpha subunit. Pyruvate is required as a cofactor. Is synthesized initially as an inactive proenzyme. Formation of the active enzyme involves a self-maturation process in which the active site pyruvoyl group is generated from an internal serine residue via an autocatalytic post-translational modification. Two non-identical subunits are generated from the proenzyme in this reaction, and the pyruvate is formed at the N-terminus of the alpha chain, which is derived from the carboxyl end of the proenzyme. The post-translation cleavage follows an unusual pathway, termed non-hydrolytic serinolysis, in which the side chain hydroxyl group of the serine supplies its oxygen atom to form the C-terminus of the beta chain, while the remainder of the serine residue undergoes an oxidative deamination to produce ammonia and the pyruvoyl prosthetic group on the alpha chain.

It localises to the cell membrane. The enzyme catalyses a 1,2-diacyl-sn-glycero-3-phospho-L-serine + H(+) = a 1,2-diacyl-sn-glycero-3-phosphoethanolamine + CO2. Its pathway is phospholipid metabolism; phosphatidylethanolamine biosynthesis; phosphatidylethanolamine from CDP-diacylglycerol: step 2/2. Catalyzes the formation of phosphatidylethanolamine (PtdEtn) from phosphatidylserine (PtdSer). In Chlorobium chlorochromatii (strain CaD3), this protein is Phosphatidylserine decarboxylase proenzyme.